Consider the following 151-residue polypeptide: Putative pre-16S rRNA nuclease (151 aa).

The protein belongs to the YqgF nuclease family.

The protein resides in the cytoplasm. Could be a nuclease involved in processing of the 5'-end of pre-16S rRNA. The chain is Putative pre-16S rRNA nuclease from Onion yellows phytoplasma (strain OY-M).